The sequence spans 637 residues: 1,4-alpha-glucan branching enzyme GlgB (637 aa).

The Nucleophile role is filled by Asp307. Residue Glu361 is the Proton donor of the active site.

It belongs to the glycosyl hydrolase 13 family. GlgB subfamily. As to quaternary structure, monomer.

It catalyses the reaction Transfers a segment of a (1-&gt;4)-alpha-D-glucan chain to a primary hydroxy group in a similar glucan chain.. Its pathway is glycan biosynthesis; glycogen biosynthesis. Catalyzes the formation of the alpha-1,6-glucosidic linkages in glycogen by scission of a 1,4-alpha-linked oligosaccharide from growing alpha-1,4-glucan chains and the subsequent attachment of the oligosaccharide to the alpha-1,6 position. The protein is 1,4-alpha-glucan branching enzyme GlgB of Oceanobacillus iheyensis (strain DSM 14371 / CIP 107618 / JCM 11309 / KCTC 3954 / HTE831).